The following is a 145-amino-acid chain: Large ribosomal subunit protein bL9 (145 aa).

Belongs to the bacterial ribosomal protein bL9 family.

Binds to the 23S rRNA. The sequence is that of Large ribosomal subunit protein bL9 from Ureaplasma parvum serovar 3 (strain ATCC 700970).